The sequence spans 315 residues: Methionyl-tRNA formyltransferase (315 aa).

113–116 is a (6S)-5,6,7,8-tetrahydrofolate binding site; it reads SLLP.

This sequence belongs to the Fmt family.

It catalyses the reaction L-methionyl-tRNA(fMet) + (6R)-10-formyltetrahydrofolate = N-formyl-L-methionyl-tRNA(fMet) + (6S)-5,6,7,8-tetrahydrofolate + H(+). Attaches a formyl group to the free amino group of methionyl-tRNA(fMet). The formyl group appears to play a dual role in the initiator identity of N-formylmethionyl-tRNA by promoting its recognition by IF2 and preventing the misappropriation of this tRNA by the elongation apparatus. The chain is Methionyl-tRNA formyltransferase from Escherichia coli O45:K1 (strain S88 / ExPEC).